Here is an 848-residue protein sequence, read N- to C-terminus: Leucine--tRNA ligase (848 aa).

The span at 1-16 (MCPEQPHDTRAERDEM) shows a compositional bias: basic and acidic residues. Residues 1–30 (MCPEQPHDTRAERDEMSEQTQQAAQPAETA) are disordered. Positions 18–30 (EQTQQAAQPAETA) are enriched in low complexity. The 'HIGH' region signature appears at 69–79 (PYPSGDLHMGH). Positions 614-618 (KMSKS) match the 'KMSKS' region motif. K617 serves as a coordination point for ATP.

The protein belongs to the class-I aminoacyl-tRNA synthetase family.

The protein resides in the cytoplasm. The enzyme catalyses tRNA(Leu) + L-leucine + ATP = L-leucyl-tRNA(Leu) + AMP + diphosphate. The polypeptide is Leucine--tRNA ligase (Nocardioides sp. (strain ATCC BAA-499 / JS614)).